The chain runs to 471 residues: 5-hydroxytryptamine receptor 2A (471 aa).

Over 1–80 (MEILCEDNIS…LQEKNWSALL (80 aa)) the chain is Extracellular. N8, N38, N44, N51, and N54 each carry an N-linked (GlcNAc...) asparagine glycan. The helical transmembrane segment at 81-97 (TTVVIILTIAGNILVIM) threads the bilayer. Residues 98–111 (AVSLEKKLQNATNY) lie on the Cytoplasmic side of the membrane. A helical membrane pass occupies residues 112-137 (FLMSLAIADMLLGFLVMPVSMLTILY). Residues 138 to 146 (GYRWPLPSK) are Extracellular-facing. The chain crosses the membrane as a helical span at residues 147–171 (LCAIWIYLDVLFSTASIMHLCAISL). C148 and C227 form a disulfide bridge. D155 provides a ligand contact to serotonin. The DRY motif; important for ligand-induced conformation changes motif lies at 172–174 (DRY). Over 172 to 191 (DRYVAIQNPIHHSRFNSRTK) the chain is Cytoplasmic. A helical membrane pass occupies residues 192 to 215 (AFLKIIAVWTISVGISMPIPVFGL). Residues 216-232 (QDDSKVFKEGSCLLADD) are Extracellular-facing. A helical transmembrane segment spans residues 233-258 (NFVLIGSFVAFFIPLTIMVITYFLTI). The Cytoplasmic portion of the chain corresponds to 259–322 (KSLQKEATLC…QSISNEQKAC (64 aa)). S280 bears the Phosphoserine mark. Residues 323–348 (KVLGIVFFLFVVMWCPFFITNIMAVI) traverse the membrane as a helical segment. N343 serves as a coordination point for serotonin. C349 and C353 form a disulfide bridge. The Extracellular segment spans residues 349–356 (CKESCNEN). The helical transmembrane segment at 357–382 (VIGALLNVFVWIGYLSSAVNPLVYTL) threads the bilayer. An NPxxY motif; important for ligand-induced conformation changes and signaling motif is present at residues 376–380 (NPLVY). Over 383 to 471 (FNKTYRSAFS…ETVNEKVSCV (89 aa)) the chain is Cytoplasmic. A PDZ-binding motif is present at residues 469-471 (SCV).

Belongs to the G-protein coupled receptor 1 family. Interacts (via C-terminus) with MPDZ and PATJ. May interact (via C-terminus) with MPP3, PRDX6, DLG4, DLG1, CASK, APBA1 and MAGI2. Interacts with GRM2 and DRD2; this may affect signaling. In terms of tissue distribution, detected in adult intestine, especially in mucosal epithelium, longitudinal and circular layers of muscularis externa and myenteric plexuses. Highly expressed in Paneth cells, and detected at lower levels in enterocytes (at protein level). Detected in brain cortex.

It is found in the cell membrane. The protein resides in the cell projection. It localises to the axon. Its subcellular location is the cytoplasmic vesicle. The protein localises to the membrane. It is found in the caveola. The protein resides in the dendrite. It localises to the presynapse. Its activity is regulated as follows. G-protein coupled receptor activity is regulated by lipids: oleamide increases HTR2A-mediated activity. Its function is as follows. G-protein coupled receptor for 5-hydroxytryptamine (serotonin). Also functions as a receptor for various drugs and psychoactive substances, including mescaline, psilocybin, 1-(2,5-dimethoxy-4-iodophenyl)-2-aminopropane (DOI) and lysergic acid diethylamide (LSD). Ligand binding causes a conformation change that triggers signaling via guanine nucleotide-binding proteins (G proteins) and modulates the activity of downstream effectors. HTR2A is coupled to G(q)/G(11) G alpha proteins and activates phospholipase C-beta, releasing diacylglycerol (DAG) and inositol 1,4,5-trisphosphate (IP3) second messengers that modulate the activity of phosphatidylinositol 3-kinase and promote the release of Ca(2+) ions from intracellular stores, respectively. Beta-arrestin family members inhibit signaling via G proteins and mediate activation of alternative signaling pathways. Affects neural activity, perception, cognition and mood. Plays a role in the regulation of behavior, including responses to anxiogenic situations and psychoactive substances. Plays a role in intestinal smooth muscle contraction, and may play a role in arterial vasoconstriction. The protein is 5-hydroxytryptamine receptor 2A (Htr2a) of Rattus norvegicus (Rat).